Here is a 257-residue protein sequence, read N- to C-terminus: MEILQFIGYGNMAQAILEGAHEILSKRFILEITGRNPEKIAPFLQEKNIQAQIVPYKDAIDIHQKFVFLLFKPYNLKDFNYQGQAKSVLSALAGVGFKALSDAIDSLHYLKCMPNIASKFALSSTAVCEKSPMPLISQKALSVIESFGNCVRVGHEELVDASVATNGSALAFLSLVANSLKDAGIREGLNARGSLELVKMSFKGFAKLLEKERPEMIIEQICTPKGATIEGLSVLEKKGVRGAFIEACHKSVKKMRL.

This sequence belongs to the pyrroline-5-carboxylate reductase family.

The protein localises to the cytoplasm. It carries out the reaction L-proline + NADP(+) = (S)-1-pyrroline-5-carboxylate + NADPH + 2 H(+). The catalysed reaction is L-proline + NAD(+) = (S)-1-pyrroline-5-carboxylate + NADH + 2 H(+). It participates in amino-acid biosynthesis; L-proline biosynthesis; L-proline from L-glutamate 5-semialdehyde: step 1/1. Functionally, catalyzes the reduction of 1-pyrroline-5-carboxylate (PCA) to L-proline. In Helicobacter pylori (strain ATCC 700392 / 26695) (Campylobacter pylori), this protein is Pyrroline-5-carboxylate reductase.